Here is a 391-residue protein sequence, read N- to C-terminus: Casein kinase II subunit alpha (391 aa).

The tract at residues 36-41 is interaction with beta subunit; that stretch reads QDDYQL. Positions 39-324 constitute a Protein kinase domain; the sequence is YQLVRKLGRG…AREAMEHPYF (286 aa). ATP is bound by residues 45–53 and Lys68; that span reads LGRGKYSEV. Asp156 acts as the Proton acceptor in catalysis. Thr344 and Thr360 each carry phosphothreonine; by CDK1. 2 positions are modified to phosphoserine; by CDK1: Ser362 and Ser370.

Belongs to the protein kinase superfamily. Ser/Thr protein kinase family. CK2 subfamily. In terms of assembly, heterotetramer composed of two catalytic subunits (alpha chain and/or alpha' chain) and two regulatory subunits (beta chains). The tetramer can exist as a combination of 2 alpha/2 beta, 2 alpha'/2 beta or 1 alpha/1 alpha'/2 beta subunits. Also part of a CK2-SPT16-SSRP1 complex composed of SSRP1, SUPT16H, CSNK2A1, CSNK2A2 and CSNK2B, which forms following UV irradiation. Interacts with RNPS1. Interacts with SNAI1. Interacts with PML. Interacts with CCAR2. Interacts with HIRIP3. In terms of processing, phosphorylated at Thr-344, Thr-360, Ser-362 and Ser-370 by CDK1 in prophase and metaphase and dephosphorylated during anaphase. Phosphorylation does not directly affect casein kinase 2 activity, but may contribute to its regulation by forming binding sites for interacting proteins and/or targeting it to different compartments.

It is found in the nucleus. It carries out the reaction L-seryl-[protein] + ATP = O-phospho-L-seryl-[protein] + ADP + H(+). The catalysed reaction is L-threonyl-[protein] + ATP = O-phospho-L-threonyl-[protein] + ADP + H(+). With respect to regulation, constitutively active protein kinase whose activity is not directly affected by phosphorylation. Seems to be regulated by level of expression and localization. In terms of biological role, catalytic subunit of a constitutively active serine/threonine-protein kinase complex that phosphorylates a large number of substrates containing acidic residues C-terminal to the phosphorylated serine or threonine. Regulates numerous cellular processes, such as cell cycle progression, apoptosis and transcription, as well as viral infection. May act as a regulatory node which integrates and coordinates numerous signals leading to an appropriate cellular response. During mitosis, functions as a component of the p53/TP53-dependent spindle assembly checkpoint (SAC) that maintains cyclin-B-CDK1 activity and G2 arrest in response to spindle damage. Also required for p53/TP53-mediated apoptosis, phosphorylating 'Ser-392' of p53/TP53 following UV irradiation. Phosphorylates a number of DNA repair proteins in response to DNA damage, such as MDC1, MRE11, RAD9A, RAD51 and HTATSF1, promoting their recruitment to DNA damage sites. Can also negatively regulate apoptosis. Phosphorylates the caspases CASP9 and CASP2 and the apoptotic regulator NOL3. Phosphorylation protects CASP9 from cleavage and activation by CASP8, and inhibits the dimerization of CASP2 and activation of CASP8. Phosphorylates YY1, protecting YY1 from cleavage by CASP7 during apoptosis. Regulates transcription by direct phosphorylation of RNA polymerases I, II, III and IV. Also phosphorylates and regulates numerous transcription factors including NF-kappa-B, STAT1, CREB1, IRF1, IRF2, ATF1, ATF4, SRF, MAX, JUN, FOS, MYC and MYB. Phosphorylates Hsp90 and its co-chaperones FKBP4 and CDC37, which is essential for chaperone function. Mediates sequential phosphorylation of FNIP1, promoting its gradual interaction with Hsp90, leading to activate both kinase and non-kinase client proteins of Hsp90. Regulates Wnt signaling by phosphorylating CTNNB1 and the transcription factor LEF1. Acts as an ectokinase that phosphorylates several extracellular proteins. Phosphorylates PML at 'Ser-565' and primes it for ubiquitin-mediated degradation. Plays an important role in the circadian clock function by phosphorylating BMAL1 at 'Ser-90' which is pivotal for its interaction with CLOCK and which controls CLOCK nuclear entry. Phosphorylates FMR1, promoting FMR1-dependent formation of a membraneless compartment. May phosphorylate histone H2A on 'Ser-1'. The sequence is that of Casein kinase II subunit alpha (Csnk2a1) from Mus musculus (Mouse).